The chain runs to 106 residues: ATP-dependent Clp protease adapter protein ClpS (106 aa).

It belongs to the ClpS family. As to quaternary structure, binds to the N-terminal domain of the chaperone ClpA.

In terms of biological role, involved in the modulation of the specificity of the ClpAP-mediated ATP-dependent protein degradation. The polypeptide is ATP-dependent Clp protease adapter protein ClpS (Salmonella gallinarum (strain 287/91 / NCTC 13346)).